The sequence spans 644 residues: Translation factor guf1, mitochondrial (644 aa).

A mitochondrion-targeting transit peptide spans 1 to 31 (MTLRRFSYTFQARILRGLQARPVFVLPSRSH). The 182-residue stretch at 51–232 (VNIRNWAIIS…AIIQRVPHPI (182 aa)) folds into the tr-type G domain. Residues 60–67 (SHIDHGKS), 125–129 (DTPGH), and 179–182 (NKID) contribute to the GTP site.

The protein belongs to the TRAFAC class translation factor GTPase superfamily. Classic translation factor GTPase family. LepA subfamily.

Its subcellular location is the mitochondrion inner membrane. The catalysed reaction is GTP + H2O = GDP + phosphate + H(+). Its function is as follows. Promotes mitochondrial protein synthesis. May act as a fidelity factor of the translation reaction, by catalyzing a one-codon backward translocation of tRNAs on improperly translocated ribosomes. Binds to mitochondrial ribosomes in a GTP-dependent manner. This Schizosaccharomyces japonicus (strain yFS275 / FY16936) (Fission yeast) protein is Translation factor guf1, mitochondrial (guf1).